A 250-amino-acid polypeptide reads, in one-letter code: 4-hydroxy-tetrahydrodipicolinate reductase (250 aa).

Residues 10–15, 78–80, and 105–108 each bind NAD(+); these read GVKGRI, GTT, and APNF. The active-site Proton donor/acceptor is histidine 135. Histidine 136 lines the (S)-2,3,4,5-tetrahydrodipicolinate pocket. The active-site Proton donor is the lysine 139. 145-146 provides a ligand contact to (S)-2,3,4,5-tetrahydrodipicolinate; that stretch reads GT.

It belongs to the DapB family.

The protein resides in the cytoplasm. The enzyme catalyses (S)-2,3,4,5-tetrahydrodipicolinate + NAD(+) + H2O = (2S,4S)-4-hydroxy-2,3,4,5-tetrahydrodipicolinate + NADH + H(+). The catalysed reaction is (S)-2,3,4,5-tetrahydrodipicolinate + NADP(+) + H2O = (2S,4S)-4-hydroxy-2,3,4,5-tetrahydrodipicolinate + NADPH + H(+). The protein operates within amino-acid biosynthesis; L-lysine biosynthesis via DAP pathway; (S)-tetrahydrodipicolinate from L-aspartate: step 4/4. Functionally, catalyzes the conversion of 4-hydroxy-tetrahydrodipicolinate (HTPA) to tetrahydrodipicolinate. This is 4-hydroxy-tetrahydrodipicolinate reductase from Streptomyces avermitilis (strain ATCC 31267 / DSM 46492 / JCM 5070 / NBRC 14893 / NCIMB 12804 / NRRL 8165 / MA-4680).